A 217-amino-acid chain; its full sequence is ATP phosphoribosyltransferase (217 aa).

This sequence belongs to the ATP phosphoribosyltransferase family. Short subfamily. As to quaternary structure, heteromultimer composed of HisG and HisZ subunits.

It is found in the cytoplasm. It catalyses the reaction 1-(5-phospho-beta-D-ribosyl)-ATP + diphosphate = 5-phospho-alpha-D-ribose 1-diphosphate + ATP. It participates in amino-acid biosynthesis; L-histidine biosynthesis; L-histidine from 5-phospho-alpha-D-ribose 1-diphosphate: step 1/9. Catalyzes the condensation of ATP and 5-phosphoribose 1-diphosphate to form N'-(5'-phosphoribosyl)-ATP (PR-ATP). Has a crucial role in the pathway because the rate of histidine biosynthesis seems to be controlled primarily by regulation of HisG enzymatic activity. The sequence is that of ATP phosphoribosyltransferase from Syntrophomonas wolfei subsp. wolfei (strain DSM 2245B / Goettingen).